The chain runs to 64 residues: Beta-defensin 13 (64 aa).

The N-terminal stretch at 1-22 (MRIFSLIVAGLVLLIQLYPAWG) is a signal peptide. Cystine bridges form between Cys-30–Cys-57, Cys-37–Cys-51, and Cys-41–Cys-58.

It belongs to the beta-defensin family. Expressed in testis and to a lesser extent in epididymis (caput, corpus and cauda). Also weakly expressed in kidneys.

The protein resides in the secreted. Its function is as follows. Has antibacterial activity. This chain is Beta-defensin 13 (Defb13), found in Mus musculus (Mouse).